The following is a 512-amino-acid chain: Spastin homolog (512 aa).

At 1–274 (MFAFSKGPAG…FKGLRQPVKG (274 aa)) the chain is on the cytoplasmic side. Residues 32-97 (IEMDELTKHA…MKLEKSAQDR (66 aa)) are a coiled coil. Residues 110-182 (KQSRSATVGP…SDTVHPEPPV (73 aa)) are disordered. The tract at residues 115–233 (ATVGPSRPAS…ERLLDEVLDN (119 aa)) is MTBD. Basic and acidic residues predominate over residues 137-163 (APEKKNAAKAKENDENRHVCSRGDRCG). The helical intramembrane region spans 275–294 (ILLFGPPGNGKTLLAKAVAG). 279–286 (GPPGNGKT) serves as a coordination point for ATP. The Cytoplasmic segment spans residues 295-512 (ESKQMFFNIS…LSDFSRSFGC (218 aa)).

It belongs to the AAA ATPase family. Spastin subfamily. In terms of assembly, homohexamer. The homohexamer is stabilized by ATP-binding. The homohexamer may adopt a ring conformation through which microtubules pass prior to being severed. Interacts with microtubules. Interacts (via N-terminus) with tubulin; the interaction is direct.

Its subcellular location is the membrane. The protein resides in the cytoplasm. It is found in the cytoskeleton. The protein localises to the perinuclear region. It catalyses the reaction n ATP + n H2O + a microtubule = n ADP + n phosphate + (n+1) alpha/beta tubulin heterodimers.. Functionally, ATP-dependent microtubule severing protein that specifically recognizes and cuts microtubules. Probably by regulating microtubule remodeling, plays a role in new synapse formation in GABAergic DD (Dorsal D type) neurons. This Caenorhabditis elegans protein is Spastin homolog.